Consider the following 400-residue polypeptide: Nicotinate phosphoribosyltransferase (400 aa).

The residue at position 220 (histidine 220) is a Phosphohistidine; by autocatalysis.

This sequence belongs to the NAPRTase family. Transiently phosphorylated on a His residue during the reaction cycle. Phosphorylation strongly increases the affinity for substrates and increases the rate of nicotinate D-ribonucleotide production. Dephosphorylation regenerates the low-affinity form of the enzyme, leading to product release.

The enzyme catalyses nicotinate + 5-phospho-alpha-D-ribose 1-diphosphate + ATP + H2O = nicotinate beta-D-ribonucleotide + ADP + phosphate + diphosphate. It participates in cofactor biosynthesis; NAD(+) biosynthesis; nicotinate D-ribonucleotide from nicotinate: step 1/1. Functionally, catalyzes the synthesis of beta-nicotinate D-ribonucleotide from nicotinate and 5-phospho-D-ribose 1-phosphate at the expense of ATP. The sequence is that of Nicotinate phosphoribosyltransferase from Salmonella typhi.